A 372-amino-acid chain; its full sequence is tRNA-specific 2-thiouridylase MnmA (372 aa).

Residues 13–20 and Met39 each bind ATP; that span reads GMSGGVDS. Residues 99–101 are interaction with target base in tRNA; it reads NPD. Cys104 serves as the catalytic Nucleophile. The cysteines at positions 104 and 200 are disulfide-linked. Gly128 is an ATP binding site. Residues 150–152 are interaction with tRNA; sequence KDQ. Residue Cys200 is the Cysteine persulfide intermediate of the active site. An interaction with tRNA region spans residues 310–311; sequence RY.

It belongs to the MnmA/TRMU family.

It localises to the cytoplasm. It catalyses the reaction S-sulfanyl-L-cysteinyl-[protein] + uridine(34) in tRNA + AH2 + ATP = 2-thiouridine(34) in tRNA + L-cysteinyl-[protein] + A + AMP + diphosphate + H(+). Its function is as follows. Catalyzes the 2-thiolation of uridine at the wobble position (U34) of tRNA, leading to the formation of s(2)U34. The sequence is that of tRNA-specific 2-thiouridylase MnmA from Bacillus licheniformis (strain ATCC 14580 / DSM 13 / JCM 2505 / CCUG 7422 / NBRC 12200 / NCIMB 9375 / NCTC 10341 / NRRL NRS-1264 / Gibson 46).